Reading from the N-terminus, the 459-residue chain is Cysteine--tRNA ligase (459 aa).

A Zn(2+)-binding site is contributed by Cys-31. Residues 33–43 (PTVYYNPHIGN) carry the 'HIGH' region motif. Positions 216, 241, and 245 each coordinate Zn(2+). The 'KMSKS' region motif lies at 274–278 (KMSKS). Lys-277 contacts ATP.

The protein belongs to the class-I aminoacyl-tRNA synthetase family. In terms of assembly, monomer. The cofactor is Zn(2+).

It localises to the cytoplasm. It catalyses the reaction tRNA(Cys) + L-cysteine + ATP = L-cysteinyl-tRNA(Cys) + AMP + diphosphate. The polypeptide is Cysteine--tRNA ligase (Rickettsia africae (strain ESF-5)).